We begin with the raw amino-acid sequence, 313 residues long: Tyrosine recombinase XerC (313 aa).

One can recognise a Core-binding (CB) domain in the interval 11–97 (NSLQKPLERF…SLRSFFDFLI (87 aa)). One can recognise a Tyr recombinase domain in the interval 118-298 (PLPKNLDVDE…DFQHLAQAYD (181 aa)). Catalysis depends on residues Arg-157, Lys-181, His-250, Arg-253, and His-276. Residue Tyr-285 is the O-(3'-phospho-DNA)-tyrosine intermediate of the active site.

It belongs to the 'phage' integrase family. XerC subfamily. As to quaternary structure, forms a cyclic heterotetrameric complex composed of two molecules of XerC and two molecules of XerD.

The protein localises to the cytoplasm. Functionally, site-specific tyrosine recombinase, which acts by catalyzing the cutting and rejoining of the recombining DNA molecules. The XerC-XerD complex is essential to convert dimers of the bacterial chromosome into monomers to permit their segregation at cell division. It also contributes to the segregational stability of plasmids. The chain is Tyrosine recombinase XerC from Vibrio campbellii (strain ATCC BAA-1116).